Reading from the N-terminus, the 136-residue chain is Histone H3.3C-like (136 aa).

Position 3 is an asymmetric dimethylarginine; by PRMT6; alternate (R3). Position 3 is a citrulline; alternate (R3). The residue at position 4 (T4) is a Phosphothreonine; by HASPIN. Residue K5 is modified to Allysine; alternate. K5 carries the N6,N6,N6-trimethyllysine; alternate modification. K5 is modified (N6,N6-dimethyllysine; alternate). K5 carries the post-translational modification N6-(2-hydroxyisobutyryl)lysine; alternate. K5 is modified (N6-(beta-hydroxybutyryl)lysine; alternate). Position 5 is an N6-acetyllysine; alternate (K5). K5 is subject to N6-methyllysine; alternate. T7 bears the Phosphothreonine; by PKC mark. K10 is modified (N6,N6,N6-trimethyllysine; alternate). K10 carries the post-translational modification N6,N6-dimethyllysine; alternate. K10 is modified (N6-(2-hydroxyisobutyryl)lysine; alternate). The residue at position 10 (K10) is an N6-acetyllysine; alternate. N6-methyllysine; alternate is present on K10. S11 is subject to ADP-ribosylserine; alternate. At S11 the chain carries Phosphoserine; alternate; by AURKB, AURKC, RPS6KA3, RPS6KA4 and RPS6KA5. T12 is modified (phosphothreonine; by PKC). K15 carries the post-translational modification N6-(2-hydroxyisobutyryl)lysine; alternate. Residue K15 is modified to N6-(beta-hydroxybutyryl)lysine; alternate. K15 carries the post-translational modification N6-acetyllysine; alternate. N6-glutaryllysine; alternate is present on K15. At K15 the chain carries N6-succinyllysine; alternate. Citrulline; alternate is present on R18. At R18 the chain carries Asymmetric dimethylarginine; by CARM1; alternate. An N6-(2-hydroxyisobutyryl)lysine; alternate mark is found at K19 and K28. Residue K19 is modified to N6-(beta-hydroxybutyryl)lysine; alternate. N6-acetyllysine; alternate occurs at positions 19 and 28. 2 positions are modified to N6-methyllysine; alternate: K19 and K28. An N6-glutaryllysine; alternate mark is found at K19 and K28. An N6-butyryllysine; alternate modification is found at K19. K28 is modified (N6,N6,N6-trimethyllysine; alternate). K28 carries the post-translational modification N6,N6-dimethyllysine; alternate. At S29 the chain carries ADP-ribosylserine; alternate. S29 is subject to Phosphoserine; alternate; by AURKB, AURKC and RPS6KA5. At S32 the chain carries Phosphoserine. At K38 the chain carries N6-methyllysine. The residue at position 42 (Y42) is a Phosphotyrosine. An N6,N6,N6-trimethyllysine; alternate modification is found at K57. K57 is subject to N6-(2-hydroxyisobutyryl)lysine; alternate. K57 is modified (N6-(beta-hydroxybutyryl)lysine; alternate). K57 bears the N6-acetyllysine; alternate mark. K57 carries the post-translational modification N6-glutaryllysine; alternate. An N6-succinyllysine; alternate modification is found at K57. Position 57 is an N6-methyllysine; by EHMT2; alternate (K57). Residue S58 is modified to Phosphoserine. Residues K65 and K80 each carry the N6-(2-hydroxyisobutyryl)lysine; alternate modification. Residues K65 and K80 each carry the N6-methyllysine; alternate modification. The residue at position 80 (K80) is an N6,N6,N6-trimethyllysine; alternate. An N6,N6-dimethyllysine; alternate modification is found at K80. Position 80 is an N6-acetyllysine; alternate (K80). K80 carries the N6-glutaryllysine; alternate modification. K80 is subject to N6-succinyllysine; alternate. Residue T81 is modified to Phosphothreonine. S87 bears the Phosphoserine mark.

Belongs to the histone H3 family. As to quaternary structure, the nucleosome is a histone octamer containing two molecules each of H2A, H2B, H3 and H4 assembled in one H3-H4 heterotetramer and two H2A-H2B heterodimers. The octamer wraps approximately 147 bp of DNA. In terms of processing, acetylation is generally linked to gene activation. Acetylation on Lys-19 favors methylation at Arg-18. Post-translationally, citrullination at Arg-18 by PADI4 impairs methylation and represses transcription. Asymmetric dimethylation at Arg-18 (H3R17me2a) by CARM1 is linked to gene activation. Asymmetric dimethylation at Arg-3 (H3R2me2a) by PRMT6 is linked to gene repression and is mutually exclusive with H3 Lys-5 methylation (H3K4me2 and H3K4me3). H3R2me2a is present at the 3' of genes regardless of their transcription state and is enriched on inactive promoters, while it is absent on active promoters. In terms of processing, methylation at Lys-5 (H3K4me) and Lys-80 (H3K79me) are linked to gene activation. Methylation at Lys-5 (H3K4me) facilitates subsequent acetylation of H3 and H4. Methylation at Lys-80 (H3K79me) is associated with DNA double-strand break (DSB) responses and is a specific target for TP53BP1. Methylation at Lys-10 (H3K9me) and Lys-28 (H3K27me) are linked to gene repression. Methylation at Lys-10 (H3K9me) is a specific target for HP1 proteins (CBX1, CBX3 and CBX5) and prevents subsequent phosphorylation at Ser-11 (H3S10ph) and acetylation of H3 and H4. Methylation at Lys-5 (H3K4me) and Lys-80 (H3K79me) require preliminary monoubiquitination of H2B at 'Lys-120'. Methylation at Lys-10 (H3K9me) and Lys-28 (H3K27me) are enriched in inactive X chromosome chromatin. Monomethylation at Lys-57 (H3K56me1) by EHMT2/G9A in G1 phase promotes interaction with PCNA and is required for DNA replication. Post-translationally, phosphorylated at Thr-4 (H3T3ph) by HASPIN during prophase and dephosphorylated during anaphase. Phosphorylation at Ser-11 (H3S10ph) by AURKB is crucial for chromosome condensation and cell-cycle progression during mitosis and meiosis. In addition phosphorylation at Ser-11 (H3S10ph) by RPS6KA4 and RPS6KA5 is important during interphase because it enables the transcription of genes following external stimulation, like mitogens, stress, growth factors or UV irradiation and result in the activation of genes, such as c-fos and c-jun. Phosphorylation at Ser-11 (H3S10ph), which is linked to gene activation, prevents methylation at Lys-10 (H3K9me) but facilitates acetylation of H3 and H4. Phosphorylation at Ser-11 (H3S10ph) by AURKB mediates the dissociation of HP1 proteins (CBX1, CBX3 and CBX5) from heterochromatin. Phosphorylation at Ser-11 (H3S10ph) is also an essential regulatory mechanism for neoplastic cell transformation. Phosphorylated at Ser-29 (H3S28ph) by MAP3K20 isoform 1, RPS6KA5 or AURKB during mitosis or upon ultraviolet B irradiation. Phosphorylation at Thr-7 (H3T6ph) by PRKCB is a specific tag for epigenetic transcriptional activation that prevents demethylation of Lys-5 (H3K4me) by LSD1/KDM1A. At centromeres, specifically phosphorylated at Thr-12 (H3T11ph) from prophase to early anaphase, by DAPK3 and PKN1. Phosphorylation at Thr-12 (H3T11ph) by PKN1 or isoform M2 of PKM (PKM2) is a specific tag for epigenetic transcriptional activation that promotes demethylation of Lys-10 (H3K9me) by KDM4C/JMJD2C. Phosphorylation at Tyr-42 (H3Y41ph) by JAK2 promotes exclusion of CBX5 (HP1 alpha) from chromatin. Lysine deamination at Lys-5 (H3K4all) to form allysine is mediated by LOXL2. Allysine formation by LOXL2 only takes place on H3K4me3 and results in gene repression. In terms of processing, butyrylation of histones marks active promoters and competes with histone acetylation. It is present during late spermatogenesis. Post-translationally, succinylation at Lys-80 (H3K79succ) by KAT2A takes place with a maximum frequency around the transcription start sites of genes. It gives a specific tag for epigenetic transcription activation. Serine ADP-ribosylation constitutes the primary form of ADP-ribosylation of proteins in response to DNA damage. Serine ADP-ribosylation at Ser-11 (H3S10ADPr) is mutually exclusive with phosphorylation at Ser-11 (H3S10ph) and impairs acetylation at Lys-10 (H3K9ac).

Its subcellular location is the nucleus. It is found in the chromosome. Core component of nucleosome. Nucleosomes wrap and compact DNA into chromatin, limiting DNA accessibility to the cellular machineries which require DNA as a template. Histones thereby play a central role in transcription regulation, DNA repair, DNA replication and chromosomal stability. DNA accessibility is regulated via a complex set of post-translational modifications of histones, also called histone code, and nucleosome remodeling. The sequence is that of Histone H3.3C-like from Bos taurus (Bovine).